The sequence spans 513 residues: Bifunctional purine biosynthesis protein PurH (513 aa).

In terms of domain architecture, MGS-like spans 1–145 (MTKRALISVS…KNYQDVTAVV (145 aa)).

It belongs to the PurH family.

It catalyses the reaction (6R)-10-formyltetrahydrofolate + 5-amino-1-(5-phospho-beta-D-ribosyl)imidazole-4-carboxamide = 5-formamido-1-(5-phospho-D-ribosyl)imidazole-4-carboxamide + (6S)-5,6,7,8-tetrahydrofolate. It carries out the reaction IMP + H2O = 5-formamido-1-(5-phospho-D-ribosyl)imidazole-4-carboxamide. It functions in the pathway purine metabolism; IMP biosynthesis via de novo pathway; 5-formamido-1-(5-phospho-D-ribosyl)imidazole-4-carboxamide from 5-amino-1-(5-phospho-D-ribosyl)imidazole-4-carboxamide (10-formyl THF route): step 1/1. It participates in purine metabolism; IMP biosynthesis via de novo pathway; IMP from 5-formamido-1-(5-phospho-D-ribosyl)imidazole-4-carboxamide: step 1/1. This Enterococcus faecalis (strain ATCC 700802 / V583) protein is Bifunctional purine biosynthesis protein PurH.